The following is a 1173-amino-acid chain: Ubiquitin conjugation factor E4 B (1173 aa).

Position 1 is an N-acetylmethionine (M1). The tract at residues 1 to 155 (MEELSADEIR…EPSSGPEVSE (155 aa)) is disordered. Over residues 16–33 (RLAGGQTSQPTTPLTSPQ) the composition is skewed to low complexity. A phosphoserine mark is found at S23 and S31. The segment covering 51–64 (QSLGLNVHNMTPAT) has biased composition (polar residues). Low complexity predominate over residues 76–99 (SQSSEGVSSLSSSPSNSLETQSQS). Residues S84, S88, S90, S101, S103, S105, and S124 each carry the phosphoserine modification. Positions 134 to 147 (NDRREKRSLSDKEP) are enriched in basic and acidic residues. Phosphoserine is present on residues S238, S674, and S840. The tract at residues 928 to 948 (NKEQWDQLPRDQQQARQSQLA) is disordered. Positions 937–948 (RDQQQARQSQLA) are enriched in low complexity. In terms of domain architecture, U-box spans 1098 to 1171 (DAPDEFRDPL…QAWMREKQSS (74 aa)). Residue S1136 is modified to Phosphoserine.

The protein belongs to the ubiquitin conjugation factor E4 family. In terms of assembly, interacts with VCP. Interacts with STUB1/CHIP and UNC45B. Post-translationally, proteolytically cleaved by caspases during apoptosis. Cleaved efficiently at Asp-123 by caspase-6 and granzyme B. Cleaved with approximately 10-fold less efficiency at Asp-109 by caspase-3 and caspase-7. In terms of tissue distribution, expressed predominantly in neuronal tissues. Also detected in liver, heart, brain, kidney and testis.

It localises to the cytoplasm. The protein resides in the nucleus. The enzyme catalyses S-ubiquitinyl-[E2 ubiquitin-conjugating enzyme]-L-cysteine + [acceptor protein]-L-lysine = [E2 ubiquitin-conjugating enzyme]-L-cysteine + N(6)-ubiquitinyl-[acceptor protein]-L-lysine.. The protein operates within protein modification; protein ubiquitination. Functionally, ubiquitin-protein ligase that probably functions as an E3 ligase in conjunction with specific E1 and E2 ligases. May also function as an E4 ligase mediating the assembly of polyubiquitin chains on substrates ubiquitinated by another E3 ubiquitin ligase. May regulate myosin assembly in striated muscles together with STUB1 and VCP/p97 by targeting myosin chaperone UNC45B for proteasomal degradation. In Mus musculus (Mouse), this protein is Ubiquitin conjugation factor E4 B.